The primary structure comprises 406 residues: Testis-specific Y-encoded-like protein 4 (406 aa).

Disordered regions lie at residues 1–63, 81–121, 161–189, and 387–406; these read MNGV…EHCG, GLED…AKPK, EAGAAMQEKKGLQKEKKVAGGGKEETRPR, and VRVPPRQPVESPRSFRFQSG. Residues 8 to 20 show a composition bias toward polar residues; that stretch reads NELSLANTTTPSH. Residues 93–102 show a composition bias toward low complexity; the sequence is DAPSAPVAAD. Over residues 167–188 the composition is skewed to basic and acidic residues; it reads QEKKGLQKEKKVAGGGKEETRP.

It belongs to the nucleosome assembly protein (NAP) family.

This is Testis-specific Y-encoded-like protein 4 (Tspyl4) from Mus musculus (Mouse).